Consider the following 316-residue polypeptide: Cysteine synthase (316 aa).

The hydrogen sulfide site is built by N7 and R35. N6-(pyridoxal phosphate)lysine is present on K42. Pyridoxal 5'-phosphate-binding positions include N72 and 177–181 (GTGGS). A hydrogen sulfide-binding site is contributed by L268. Pyridoxal 5'-phosphate is bound at residue S272.

It belongs to the cysteine synthase/cystathionine beta-synthase family. In terms of assembly, homodimer. It depends on pyridoxal 5'-phosphate as a cofactor.

It carries out the reaction O-acetyl-L-serine + hydrogen sulfide = L-cysteine + acetate. It functions in the pathway amino-acid biosynthesis; L-cysteine biosynthesis; L-cysteine from L-serine: step 2/2. In Haemophilus influenzae (strain ATCC 51907 / DSM 11121 / KW20 / Rd), this protein is Cysteine synthase (cysK).